The primary structure comprises 871 residues: Pentatricopeptide repeat-containing protein DOT4, chloroplastic (871 aa).

The transit peptide at 1–28 (MAMLVTNLSSSSFCFFSSPHLQNQKEIR) directs the protein to the chloroplast. PPR repeat units follow at residues 60 to 94 (SVTD…DIDP), 96 to 127 (TLCS…GFVI), 128 to 158 (DSNL…VKIE), 159 to 193 (KALF…GVEM), 194 to 228 (DSYT…GFGE), 229 to 259 (RNSV…MTER), 260 to 294 (DVIS…GIEI), 295 to 329 (DLAT…CFSR), 330 to 360 (EDRF…MSDR), 361 to 395 (SVVS…GISP), 396 to 430 (DVYT…DLGF), 431 to 465 (DIFV…DIIS), 466 to 497 (WNTI…RFSP), 498 to 532 (DERT…GYFS), 533 to 563 (DRHV…IASK), 564 to 598 (DLVS…GIEA), 599 to 629 (DEIS…MRHE), and 635 to 665 (TVEH…MPIP). Residues 670–745 (IWGALLCGCR…NPGCSWIEIK (76 aa)) form a type E motif region. The segment at 746-776 (GRVNIFVAGDSSNPETENIEAFLRKVRARMI) is type E(+) motif. The tract at residues 777–871 (EEGYSPLTKY…DGHCSCRGFW (95 aa)) is type DYW motif.

It belongs to the PPR family. PCMP-H subfamily. Zn(2+) is required as a cofactor. Weakly expressed in leaves.

It localises to the plastid. Its subcellular location is the chloroplast. In terms of biological role, plays a major role in single RNA editing events in chloroplasts. Acts as a site-recognition transacting factor involved in the edition of the unique site (corresponding to cytidine-488) of rpoC1, which is a plastid-encoded subunit of the chloroplast DNA-directed RNA polymerase. May provide the catalytic activity for editing site conversion. Involved in leaf vasculature patterning. The polypeptide is Pentatricopeptide repeat-containing protein DOT4, chloroplastic (Arabidopsis thaliana (Mouse-ear cress)).